We begin with the raw amino-acid sequence, 193 residues long: Large ribosomal subunit protein uL5 (193 aa).

Belongs to the universal ribosomal protein uL5 family. Part of the 50S ribosomal subunit; part of the 5S rRNA/L5/L18/L25 subcomplex. Contacts the 5S rRNA and the P site tRNA. Forms a bridge to the 30S subunit in the 70S ribosome.

In terms of biological role, this is one of the proteins that bind and probably mediate the attachment of the 5S RNA into the large ribosomal subunit, where it forms part of the central protuberance. In the 70S ribosome it contacts protein S13 of the 30S subunit (bridge B1b), connecting the 2 subunits; this bridge is implicated in subunit movement. Contacts the P site tRNA; the 5S rRNA and some of its associated proteins might help stabilize positioning of ribosome-bound tRNAs. The protein is Large ribosomal subunit protein uL5 of Rhizorhabdus wittichii (strain DSM 6014 / CCUG 31198 / JCM 15750 / NBRC 105917 / EY 4224 / RW1) (Sphingomonas wittichii).